Reading from the N-terminus, the 341-residue chain is Methionine import ATP-binding protein MetN 1 (341 aa).

The 240-residue stretch at 2–241 (IEFRQVSKSF…PKTTIAQNFV (240 aa)) folds into the ABC transporter domain. 38-45 (GYSGAGKS) contributes to the ATP binding site.

Belongs to the ABC transporter superfamily. Methionine importer (TC 3.A.1.24) family. As to quaternary structure, the complex is composed of two ATP-binding proteins (MetN), two transmembrane proteins (MetI) and a solute-binding protein (MetQ).

It is found in the cell membrane. The catalysed reaction is L-methionine(out) + ATP + H2O = L-methionine(in) + ADP + phosphate + H(+). It catalyses the reaction D-methionine(out) + ATP + H2O = D-methionine(in) + ADP + phosphate + H(+). Functionally, part of the ABC transporter complex MetNIQ involved in methionine import. Responsible for energy coupling to the transport system. The polypeptide is Methionine import ATP-binding protein MetN 1 (Staphylococcus aureus (strain Mu50 / ATCC 700699)).